The chain runs to 57 residues: Large ribosomal subunit protein bL32 (57 aa).

The span at 1–19 (MAVPKRRMSRANTRSRRAQ) shows a compositional bias: basic residues. The interval 1–20 (MAVPKRRMSRANTRSRRAQW) is disordered.

The protein belongs to the bacterial ribosomal protein bL32 family.

This chain is Large ribosomal subunit protein bL32, found in Mycobacterium avium (strain 104).